Consider the following 336-residue polypeptide: Ketol-acid reductoisomerase (NADP(+)) (336 aa).

The KARI N-terminal Rossmann domain occupies 3–183 (AKMYYDRDVD…GCTKAGVLET (181 aa)). Residues 26 to 29 (YGSQ), R49, S52, S54, and 84 to 87 (DEQQ) each bind NADP(+). The active site involves H109. G135 contributes to the NADP(+) binding site. One can recognise a KARI C-terminal knotted domain in the interval 184–329 (TFKEETETDL…KELRDQMPFI (146 aa)). Residues D192, E196, E228, and E232 each coordinate Mg(2+). S253 is a binding site for substrate.

The protein belongs to the ketol-acid reductoisomerase family. The cofactor is Mg(2+).

The catalysed reaction is (2R)-2,3-dihydroxy-3-methylbutanoate + NADP(+) = (2S)-2-acetolactate + NADPH + H(+). It carries out the reaction (2R,3R)-2,3-dihydroxy-3-methylpentanoate + NADP(+) = (S)-2-ethyl-2-hydroxy-3-oxobutanoate + NADPH + H(+). It participates in amino-acid biosynthesis; L-isoleucine biosynthesis; L-isoleucine from 2-oxobutanoate: step 2/4. The protein operates within amino-acid biosynthesis; L-valine biosynthesis; L-valine from pyruvate: step 2/4. In terms of biological role, involved in the biosynthesis of branched-chain amino acids (BCAA). Catalyzes an alkyl-migration followed by a ketol-acid reduction of (S)-2-acetolactate (S2AL) to yield (R)-2,3-dihydroxy-isovalerate. In the isomerase reaction, S2AL is rearranged via a Mg-dependent methyl migration to produce 3-hydroxy-3-methyl-2-ketobutyrate (HMKB). In the reductase reaction, this 2-ketoacid undergoes a metal-dependent reduction by NADPH to yield (R)-2,3-dihydroxy-isovalerate. This Deinococcus radiodurans (strain ATCC 13939 / DSM 20539 / JCM 16871 / CCUG 27074 / LMG 4051 / NBRC 15346 / NCIMB 9279 / VKM B-1422 / R1) protein is Ketol-acid reductoisomerase (NADP(+)).